Reading from the N-terminus, the 96-residue chain is Large ribosomal subunit protein bL27 (96 aa).

A propeptide spanning residues 1–9 is cleaved from the precursor; sequence MLRLDLQFF. Positions 14 to 36 are disordered; it reads GVGSTKNGRDSQSKRLGAKRADG.

Belongs to the bacterial ribosomal protein bL27 family. In terms of processing, the N-terminus is cleaved by ribosomal processing cysteine protease Prp.

The protein is Large ribosomal subunit protein bL27 of Bacillus anthracis (strain A0248).